Consider the following 357-residue polypeptide: Holliday junction branch migration complex subunit RuvB (357 aa).

The segment at 3–193 (WDDTTDAEAA…FGFTAHMEFY (191 aa)) is large ATPase domain (RuvB-L). ATP-binding positions include Leu32, Arg33, Gly74, Lys77, Thr78, Thr79, 140–142 (EDF), Arg183, Tyr193, and Arg230. Residue Thr78 coordinates Mg(2+). The segment at 194-264 (GPAELERVIH…IAAAALAVYE (71 aa)) is small ATPAse domain (RuvB-S). Positions 267 to 357 (ARGLDRLDRG…GNGQPDLFGA (91 aa)) are head domain (RuvB-H). DNA-binding residues include Arg303, Arg322, and Arg327. The interval 337–357 (LGLTPPRPQSSGNGQPDLFGA) is disordered.

The protein belongs to the RuvB family. In terms of assembly, homohexamer. Forms an RuvA(8)-RuvB(12)-Holliday junction (HJ) complex. HJ DNA is sandwiched between 2 RuvA tetramers; dsDNA enters through RuvA and exits via RuvB. An RuvB hexamer assembles on each DNA strand where it exits the tetramer. Each RuvB hexamer is contacted by two RuvA subunits (via domain III) on 2 adjacent RuvB subunits; this complex drives branch migration. In the full resolvosome a probable DNA-RuvA(4)-RuvB(12)-RuvC(2) complex forms which resolves the HJ.

It is found in the cytoplasm. The catalysed reaction is ATP + H2O = ADP + phosphate + H(+). The RuvA-RuvB-RuvC complex processes Holliday junction (HJ) DNA during genetic recombination and DNA repair, while the RuvA-RuvB complex plays an important role in the rescue of blocked DNA replication forks via replication fork reversal (RFR). RuvA specifically binds to HJ cruciform DNA, conferring on it an open structure. The RuvB hexamer acts as an ATP-dependent pump, pulling dsDNA into and through the RuvAB complex. RuvB forms 2 homohexamers on either side of HJ DNA bound by 1 or 2 RuvA tetramers; 4 subunits per hexamer contact DNA at a time. Coordinated motions by a converter formed by DNA-disengaged RuvB subunits stimulates ATP hydrolysis and nucleotide exchange. Immobilization of the converter enables RuvB to convert the ATP-contained energy into a lever motion, pulling 2 nucleotides of DNA out of the RuvA tetramer per ATP hydrolyzed, thus driving DNA branch migration. The RuvB motors rotate together with the DNA substrate, which together with the progressing nucleotide cycle form the mechanistic basis for DNA recombination by continuous HJ branch migration. Branch migration allows RuvC to scan DNA until it finds its consensus sequence, where it cleaves and resolves cruciform DNA. This is Holliday junction branch migration complex subunit RuvB from Streptomyces coelicolor (strain ATCC BAA-471 / A3(2) / M145).